We begin with the raw amino-acid sequence, 485 residues long: Aspartyl/glutamyl-tRNA(Asn/Gln) amidotransferase subunit B (485 aa).

This sequence belongs to the GatB/GatE family. GatB subfamily. As to quaternary structure, heterotrimer of A, B and C subunits.

The enzyme catalyses L-glutamyl-tRNA(Gln) + L-glutamine + ATP + H2O = L-glutaminyl-tRNA(Gln) + L-glutamate + ADP + phosphate + H(+). The catalysed reaction is L-aspartyl-tRNA(Asn) + L-glutamine + ATP + H2O = L-asparaginyl-tRNA(Asn) + L-glutamate + ADP + phosphate + 2 H(+). Allows the formation of correctly charged Asn-tRNA(Asn) or Gln-tRNA(Gln) through the transamidation of misacylated Asp-tRNA(Asn) or Glu-tRNA(Gln) in organisms which lack either or both of asparaginyl-tRNA or glutaminyl-tRNA synthetases. The reaction takes place in the presence of glutamine and ATP through an activated phospho-Asp-tRNA(Asn) or phospho-Glu-tRNA(Gln). The sequence is that of Aspartyl/glutamyl-tRNA(Asn/Gln) amidotransferase subunit B from Anaplasma marginale (strain Florida).